A 286-amino-acid polypeptide reads, in one-letter code: Beta-lactamase SHV-8 (286 aa).

The first 21 residues, Met1 to Ala21, serve as a signal peptide directing secretion. Residue Ser66 is the Acyl-ester intermediate of the active site. Cys73 and Cys119 are disulfide-bonded. Residue Glu164 is the Proton acceptor of the active site. Lys230–Gly232 lines the substrate pocket.

Belongs to the class-A beta-lactamase family.

The catalysed reaction is a beta-lactam + H2O = a substituted beta-amino acid. SHV enzymes hydrolyze broad spectrum cephalosporins notably cefotaxime and ceftazidime. The sequence is that of Beta-lactamase SHV-8 (bla) from Escherichia coli.